A 360-amino-acid chain; its full sequence is Peptide chain release factor 1 (360 aa).

Glutamine 235 is modified (N5-methylglutamine).

It belongs to the prokaryotic/mitochondrial release factor family. Post-translationally, methylated by PrmC. Methylation increases the termination efficiency of RF1.

It is found in the cytoplasm. Its function is as follows. Peptide chain release factor 1 directs the termination of translation in response to the peptide chain termination codons UAG and UAA. This chain is Peptide chain release factor 1, found in Burkholderia multivorans (strain ATCC 17616 / 249).